We begin with the raw amino-acid sequence, 365 residues long: Methylthioribose-1-phosphate isomerase (365 aa).

Asp249 (proton donor) is an active-site residue.

Belongs to the eIF-2B alpha/beta/delta subunits family. MtnA subfamily.

The protein resides in the cytoplasm. It is found in the nucleus. The catalysed reaction is 5-(methylsulfanyl)-alpha-D-ribose 1-phosphate = 5-(methylsulfanyl)-D-ribulose 1-phosphate. It functions in the pathway amino-acid biosynthesis; L-methionine biosynthesis via salvage pathway; L-methionine from S-methyl-5-thio-alpha-D-ribose 1-phosphate: step 1/6. Catalyzes the interconversion of methylthioribose-1-phosphate (MTR-1-P) into methylthioribulose-1-phosphate (MTRu-1-P). The polypeptide is Methylthioribose-1-phosphate isomerase (Ostreococcus lucimarinus (strain CCE9901)).